The sequence spans 145 residues: Large ribosomal subunit protein uL14m (145 aa).

Residues 1 to 30 constitute a mitochondrion transit peptide; that stretch reads MAVLTGLFGFFAYVRGAVSQRCFSTSGSLS.

It belongs to the universal ribosomal protein uL14 family. Component of the mitochondrial ribosome large subunit (39S) which comprises a 16S rRNA and about 50 distinct proteins. Interacts with MALSU1.

It is found in the mitochondrion. Functionally, may form part of 2 intersubunit bridges in the assembled ribosome. Upon binding to MALSU1, intersubunit bridge formation is blocked, preventing ribosome formation and repressing translation. The sequence is that of Large ribosomal subunit protein uL14m (Mrpl14) from Rattus norvegicus (Rat).